We begin with the raw amino-acid sequence, 281 residues long: Kinetochore-associated protein NSL1 homolog (281 aa).

The residue at position 4 (Ser-4) is a Phosphoserine. A Phosphothreonine modification is found at Thr-244.

As to quaternary structure, component of the MIS12 complex composed of MIS12, DSN1, NSL1/DC8 and PMF1. Interacts with KNL1.

Its subcellular location is the nucleus. It localises to the chromosome. The protein resides in the centromere. It is found in the kinetochore. Its function is as follows. Part of the MIS12 complex which is required for normal chromosome alignment and segregation and kinetochore formation during mitosis. This Homo sapiens (Human) protein is Kinetochore-associated protein NSL1 homolog (NSL1).